Reading from the N-terminus, the 460-residue chain is U-box domain-containing protein 9 (460 aa).

The U-box domain maps to 73–147 (SCPEEFRCPL…SKWCKKNGLE (75 aa)). 3 ARM repeats span residues 201-244 (TEFR…NISI), 248-287 (SNKK…TLSA), and 289-328 (DSNK…TLCI).

In terms of assembly, binds to SD11, SD16, SD17, SD18, SD113, SD129 and SD25. Phosphorylated by SD1-6 and SD1-7.

The protein localises to the nucleus. It is found in the cell membrane. It carries out the reaction S-ubiquitinyl-[E2 ubiquitin-conjugating enzyme]-L-cysteine + [acceptor protein]-L-lysine = [E2 ubiquitin-conjugating enzyme]-L-cysteine + N(6)-ubiquitinyl-[acceptor protein]-L-lysine.. The protein operates within protein modification; protein ubiquitination. In terms of biological role, functions as an E3 ubiquitin ligase. May be involved in the abscisic acid-mediated signaling pathway, at least during germination. In Arabidopsis thaliana (Mouse-ear cress), this protein is U-box domain-containing protein 9 (PUB9).